The sequence spans 815 residues: uncharacterized protein (815 aa).

An N-terminal signal peptide occupies residues 1-21; that stretch reads MNIYRLSFVSCLVMAMPCAMA. The cysteines at positions 795 and 814 are disulfide-linked.

The protein belongs to the fimbrial export usher family.

The protein localises to the cell outer membrane. In terms of biological role, could be involved in the export and assembly of the putative YbgD fimbrial subunit across the outer membrane. This is an uncharacterized protein from Escherichia coli (strain K12).